Here is a 257-residue protein sequence, read N- to C-terminus: NAD-capped RNA hydrolase NudC (257 aa).

Arginine 69 provides a ligand contact to substrate. Cysteine 98 and cysteine 101 together coordinate Zn(2+). Substrate is bound at residue glutamate 111. Zn(2+) is bound by residues cysteine 116 and cysteine 119. Position 124 (tyrosine 124) interacts with substrate. The 124-residue stretch at 125-248 folds into the Nudix hydrolase domain; it reads PQIAPCIIVA…TVARRLIEDT (124 aa). 3 residues coordinate a divalent metal cation: alanine 158, glutamate 174, and glutamate 178. The Nudix box motif lies at 159 to 180; sequence GFVEVGETLEQAVAREVMEESG. 192 to 199 serves as a coordination point for substrate; it reads QPWPFPQS. Glutamate 219 lines the a divalent metal cation pocket. Alanine 241 contributes to the substrate binding site.

Belongs to the Nudix hydrolase family. NudC subfamily. As to quaternary structure, homodimer. Mg(2+) serves as cofactor. Requires Mn(2+) as cofactor. Zn(2+) is required as a cofactor.

The enzyme catalyses a 5'-end NAD(+)-phospho-ribonucleoside in mRNA + H2O = a 5'-end phospho-adenosine-phospho-ribonucleoside in mRNA + beta-nicotinamide D-ribonucleotide + 2 H(+). It catalyses the reaction NAD(+) + H2O = beta-nicotinamide D-ribonucleotide + AMP + 2 H(+). The catalysed reaction is NADH + H2O = reduced beta-nicotinamide D-ribonucleotide + AMP + 2 H(+). In terms of biological role, mRNA decapping enzyme that specifically removes the nicotinamide adenine dinucleotide (NAD) cap from a subset of mRNAs by hydrolyzing the diphosphate linkage to produce nicotinamide mononucleotide (NMN) and 5' monophosphate mRNA. The NAD-cap is present at the 5'-end of some mRNAs and stabilizes RNA against 5'-processing. Has preference for mRNAs with a 5'-end purine. Catalyzes the hydrolysis of a broad range of dinucleotide pyrophosphates. This chain is NAD-capped RNA hydrolase NudC, found in Salmonella typhi.